Reading from the N-terminus, the 275-residue chain is MPSPIALLAAATERIERVDAEALLLHALDCDRAWLFTHGDIPLAAAATESFQALVEQRARGIPVAYLIGRRGFWTLDVIVSSATLIPRAETETLVEQALQRLDHASERRVADLGTGSGAIALAIACERPQAQVLATDNSAAALDIAARNASAHGLNHVVFREGNWYEALLGERFDLIVSNPPYIAVTDPHLTQGDLRFEPPSALISGGDGLDALRILAAGAPAHLRPGGWLVLEHGWDQGAAVRTLLHTAGLVAVATMQDLEARDRVTVGRCPGF.

Residues 114 to 118 (GTGSG), Asp-137, Trp-165, and Asn-180 each bind S-adenosyl-L-methionine. 180 to 183 (NPPY) is a substrate binding site.

The protein belongs to the protein N5-glutamine methyltransferase family. PrmC subfamily.

It carries out the reaction L-glutaminyl-[peptide chain release factor] + S-adenosyl-L-methionine = N(5)-methyl-L-glutaminyl-[peptide chain release factor] + S-adenosyl-L-homocysteine + H(+). In terms of biological role, methylates the class 1 translation termination release factors RF1/PrfA and RF2/PrfB on the glutamine residue of the universally conserved GGQ motif. In Xylella fastidiosa (strain Temecula1 / ATCC 700964), this protein is Release factor glutamine methyltransferase.